We begin with the raw amino-acid sequence, 1396 residues long: Helicase ARIP4 (1396 aa).

A disordered region spans residues 1–103 (MSDASISGSE…LQKPANLRRN (103 aa)). Over residues 11 to 49 (PELDPEDMEEEEEDDEDDDEEEEEEEDEEDNDGDDEDDK) the composition is skewed to acidic residues. The segment covering 75-84 (RSTTSGQSGQ) has biased composition (polar residues). Residues 290–510 (RFSGSSGFGC…WCMVDFVRPD (221 aa)) enclose the Helicase ATP-binding domain. 303–310 (HSMGLGKT) provides a ligand contact to ATP. A DEAH box motif is present at residues 461–464 (DEGH). Residues 549–553 (LHSLL) carry the LXXLL motif 1 motif. The Helicase C-terminal domain occupies 717–891 (KMVLLFHLIE…RVVDDLNPEV (175 aa)). 2 disordered regions span residues 1117-1168 (SGKQ…PDSP) and 1194-1250 (NLGL…STMN). 2 stretches are compositionally biased toward polar residues: residues 1128-1148 (QATS…RHST) and 1218-1238 (DQSS…SYPN). The LXXLL motif 2 signature appears at 1273–1277 (LPSLL). The interval 1340 to 1396 (GLPTNNPASTFPGYLSSHSNYQASPGTSSRPLPSGETELGSCEEDGRDDDVVEVTGE) is disordered. The span at 1355–1370 (SSHSNYQASPGTSSRP) shows a compositional bias: polar residues. The segment covering 1380 to 1396 (SCEEDGRDDDVVEVTGE) has biased composition (acidic residues).

The protein belongs to the SNF2/RAD54 helicase family.

Its subcellular location is the nucleus. It carries out the reaction ATP + H2O = ADP + phosphate + H(+). Functionally, DNA helicase that modulates androgen receptor (AR)-dependent transactivation in a promoter-dependent manner. The sequence is that of Helicase ARIP4 (rad54l2) from Xenopus tropicalis (Western clawed frog).